A 650-amino-acid chain; its full sequence is Kinesin-like protein KIF22-B (650 aa).

Residues 31–359 (RVRVAVRLRP…LNFAAKSKQI (329 aa)) form the Kinesin motor domain. 116 to 123 (GPTGAGKT) serves as a coordination point for ATP. Residues 365-416 (SRETTQTVAQPAMKRPREEAEATTSSRQRKKSKTDSTESSPNSSMESTGKRK) form a disordered region. The span at 401–411 (TESSPNSSMES) shows a compositional bias: low complexity. A coiled-coil region spans residues 452–498 (KRERMALLKKWEESQMEIERLKEKQKELEQKAMEAEARLEKSNNSDL). Positions 560 to 563 (GHEN) match the Important for regulated proteolytic degradation motif.

It belongs to the TRAFAC class myosin-kinesin ATPase superfamily. Kinesin family. Ubiquitinated, leading to its subsequent proteasomal degradation.

Its subcellular location is the nucleus. The protein localises to the cytoplasm. The protein resides in the cytoskeleton. Functionally, kinesin family member that is involved in spindle formation and the movements of chromosomes during mitosis and meiosis. Binds to microtubules and to DNA. This Xenopus laevis (African clawed frog) protein is Kinesin-like protein KIF22-B (kif22-b).